We begin with the raw amino-acid sequence, 100 residues long: Large ribosomal subunit protein uL23 (100 aa).

This sequence belongs to the universal ribosomal protein uL23 family. As to quaternary structure, part of the 50S ribosomal subunit. Contacts protein L29, and trigger factor when it is bound to the ribosome.

Its function is as follows. One of the early assembly proteins it binds 23S rRNA. One of the proteins that surrounds the polypeptide exit tunnel on the outside of the ribosome. Forms the main docking site for trigger factor binding to the ribosome. The sequence is that of Large ribosomal subunit protein uL23 from Vibrio cholerae serotype O1 (strain ATCC 39541 / Classical Ogawa 395 / O395).